Consider the following 258-residue polypeptide: UPF0246 protein YaaA (258 aa).

It belongs to the UPF0246 family.

This Escherichia coli O45:K1 (strain S88 / ExPEC) protein is UPF0246 protein YaaA.